Consider the following 207-residue polypeptide: Urease accessory protein UreG (207 aa).

12 to 19 provides a ligand contact to GTP; that stretch reads GPVGAGKT.

The protein belongs to the SIMIBI class G3E GTPase family. UreG subfamily. In terms of assembly, homodimer. UreD, UreF and UreG form a complex that acts as a GTP-hydrolysis-dependent molecular chaperone, activating the urease apoprotein by helping to assemble the nickel containing metallocenter of UreC. The UreE protein probably delivers the nickel.

The protein resides in the cytoplasm. Its function is as follows. Facilitates the functional incorporation of the urease nickel metallocenter. This process requires GTP hydrolysis, probably effectuated by UreG. In Cereibacter sphaeroides (strain ATCC 17029 / ATH 2.4.9) (Rhodobacter sphaeroides), this protein is Urease accessory protein UreG.